The chain runs to 85 residues: UPF0181 protein YE1782 (85 aa).

2 disordered regions span residues 1 to 22 (MLAG…RIHQ) and 57 to 85 (DTDF…PYEG). Over residues 9-21 (SHEEQQEAVERIH) the composition is skewed to basic and acidic residues. Positions 74–85 (QDADEIEDPYEG) are enriched in acidic residues.

Belongs to the UPF0181 family.

This chain is UPF0181 protein YE1782, found in Yersinia enterocolitica serotype O:8 / biotype 1B (strain NCTC 13174 / 8081).